The following is a 347-amino-acid chain: Gas vesicle ATPase GvpN1 (347 aa).

Positions 1–11 (MTNESRKRKVR) are enriched in basic residues. The tract at residues 1–64 (MTNESRKRKV…EGFVPEEQSF (64 aa)) is disordered. Over residues 18–55 (SRGDKKQGRSQSRDDKEIERLERQNDARGQESSTHVDE) the composition is skewed to basic and acidic residues. 91-98 (GPTGCGKT) serves as a coordination point for ATP.

Belongs to the CbbQ/NirQ/NorQ/GpvN family. In terms of assembly, forms homodimers, forms a GvpN1-GvpO1 heterodimer, interacts with GvpC1 (via the latter's C-terminus) and GvpL, might interact with GvpA1.

Its subcellular location is the gas vesicle. It is found in the cytoplasm. The enzyme catalyses ATP + H2O = ADP + phosphate + H(+). In terms of biological role, an ATPase that functions in gas vesicle formation. A minor component of the gas vesicle, also found in soluble extracts. Probably enhances gas vesicle formation. Gas vesicles are hollow, gas filled proteinaceous nanostructures found in several microbial planktonic microorganisms. They allow positioning of halobacteria at the optimal depth for growth in the poorly aerated, shallow brine pools of their habitat. Expression of a 9.5 kb p-vac DNA fragment containing 2 divergently transcribed regions (gvpD-gvpE-gvpF-gvpG-gvpH-gvpI-gvpJ-gvpK-gvpL-gvpM and gvpA-gvpC-gvpN-gvpO) allows H.volcanii to produce gas vesicles. A similar region restores gas vesicle production in H.halobium without the p-vac locus, but which still have the c-vac locus. In Halobacterium salinarum (strain ATCC 700922 / JCM 11081 / NRC-1) (Halobacterium halobium), this protein is Gas vesicle ATPase GvpN1 (gvpN11).